We begin with the raw amino-acid sequence, 389 residues long: Probable DNA double-strand break repair nuclease NurA (389 aa).

Residues aspartate 74 and aspartate 151 each coordinate Mn(2+).

Belongs to the NurA family. Requires Mn(2+) as cofactor.

Involved in DNA double-strand break (DSB) repair. Probably acts with HerA to stimulate resection of the 5' strand and produce the long 3' single-strand that is required for RadA loading. The sequence is that of Probable DNA double-strand break repair nuclease NurA from Methanocaldococcus jannaschii (strain ATCC 43067 / DSM 2661 / JAL-1 / JCM 10045 / NBRC 100440) (Methanococcus jannaschii).